We begin with the raw amino-acid sequence, 734 residues long: Cytosolic endo-beta-N-acetylglucosaminidase (734 aa).

Met-1 carries the N-acetylmethionine modification. The disordered stretch occupies residues 1–45 (METSSVLTRGAARQRSPAAPEKQARDQTERRPGRRRQGRRINEDQ). Positions 22 to 31 (KQARDQTERR) are enriched in basic and acidic residues. Residues 281–375 (QNRVFFDSCD…DFFQNQDKFW (95 aa)) enclose the BRCT domain.

It belongs to the glycosyl hydrolase 85 family.

The protein localises to the cytoplasm. The protein resides in the cytosol. The enzyme catalyses an N(4)-(oligosaccharide-(1-&gt;3)-[oligosaccharide-(1-&gt;6)]-beta-D-Man-(1-&gt;4)-beta-D-GlcNAc-(1-&gt;4)-alpha-D-GlcNAc)-L-asparaginyl-[protein] + H2O = an oligosaccharide-(1-&gt;3)-[oligosaccharide-(1-&gt;6)]-beta-D-Man-(1-&gt;4)-D-GlcNAc + N(4)-(N-acetyl-beta-D-glucosaminyl)-L-asparaginyl-[protein]. Its function is as follows. Endoglycosidase that releases N-glycans from glycoproteins by cleaving the beta-1,4-glycosidic bond in the N,N'-diacetylchitobiose core. Involved in the processing of free oligosaccharides in the cytosol. This chain is Cytosolic endo-beta-N-acetylglucosaminidase (Engase), found in Mus musculus (Mouse).